We begin with the raw amino-acid sequence, 518 residues long: Metal transporter Nramp1 (518 aa).

The next 12 helical transmembrane spans lie at 35-55 (FLSHIGPGFMVCLAYLDPGNM), 68-88 (ELLWVILIGLIFALIIQSLSA), 107-127 (PVWVKTCLWLLAELAVIASDI), 131-151 (IGTGFAFNLLFHIPVWTGVLI), 172-192 (VVVALLVFVMAGCFFVEMSIV), 218-238 (IALLGALVMPHNLFLHSALVL), 255-275 (FFLFESGIALFVALLVNIAII), 315-337 (SATVYGVALLASGQSSTITGTYA), 357-377 (LMTRSIAIVPSLIVSIIGGSS), 382-402 (LIVIASMILSFELPFALIPLL), 418-438 (IYIVGFSWVLGFVIIGINIYF), and 458-478 (VLIGIVLFPLMLLYVVAVIYL).

Belongs to the NRAMP (TC 2.A.55) family.

The protein localises to the membrane. Probable metal transporter that may participate in the control of iron homeostasis. The chain is Metal transporter Nramp1 (NRAMP1) from Oryza sativa subsp. japonica (Rice).